The chain runs to 58 residues: Cholecystokinins (58 aa).

Position 52 is a sulfotyrosine (tyrosine 52). Phenylalanine 58 carries the post-translational modification Phenylalanine amide.

This sequence belongs to the gastrin/cholecystokinin family. In terms of assembly, binds to CCK-A receptors in the pancreas and CCK-B receptors in the brain. cholecystokinin 8 binds CCK-A receptors more potently than cholecystokinin 58, cholecystokinin 8 and cholecystokinin 58 bind CCK-B receptors with equal affinity. The precursor is cleaved by proteases to produce a number of active cholecystokinins. Post-translationally, cholecystokinin 58 occurs in both sulfated (CCK58(s)) and nonsulfated (CCK58(ns)) forms, which differ in their receptor-binding activities. CCK58(s) binds to the CCK-A receptor with high affinity, CCK58(ns) binds poorly to the CCK-A receptor. CCK58(s) and CCK58(ns) both bind the CCK-B receptor. In terms of processing, the precursor is cleaved by ACE, which removes the Gly-Arg-Arg peptide at the C-terminus, leading to mature hormone.

It is found in the secreted. Its function is as follows. This peptide hormone induces gall bladder contraction and the release of pancreatic enzymes in the gut. Its function in the brain is not clear. Binding to CCK-A receptors stimulates amylase release from the pancreas, binding to CCK-B receptors stimulates gastric acid secretion. cholecystokinin 58 and cholecystokinin 8, but not cholecystokinin 58 desnonopeptide, stimulate amylase release from the pancreas. cholecystokinin 58, but not cholecystokinin 8, increases bile-pancreatic volume. This Canis lupus familiaris (Dog) protein is Cholecystokinins.